The primary structure comprises 496 residues: MHSFSTLPNHRIGLYILWTIPVLFVIFKLLAPAKCSLPIVNGRRWFEIGQYQARRRFSLDGRGIILKGLQKARAFRVVSQKGPKIILGPEYANEVKSHPACNADVFIAKEFHAHVSGFEVLRPQHVMKDAIRLKLTRSIGALMRPISDETTLILETQWGNSNCWHELDLKSTIAALVSRVSAVMFVGEELGRDQKWLSIVTNYSSDMFVADLDLCKWPEILRPIATYFLSSCGKLRRHIQEAALMLDPILSEGNSTHGNKQNFLDWFEEIAGGRKYNPVLAQISLAAAAIDTTSDLIIQTLTDICRFPDSEKLQEELREEMVRVLRADGWEKSAMYNLKLLDSVLKETQRVKPVVVFGMGRYVTEQITLHDGTVIPKGETINVVNTRVWDSAVYENPLEWDPYRFLRRRDSGDHAAHLVSPTPDHMGFGLGKHSCPGRFFAATKIKILLCHILLKYDVKISDEASSKVVSSGNFLFPDATLRISVRRRQENLSIWD.

Residues isoleucine 12 to proline 32 form a helical membrane-spanning segment. Cysteine 435 contacts heme.

This sequence belongs to the cytochrome P450 family. Heme serves as cofactor.

The protein resides in the membrane. It participates in secondary metabolite biosynthesis; terpenoid biosynthesis. In terms of biological role, cytochrome P450 monooxygenase; part of the gene cluster B that mediates the biosynthesis of the fungal meroterpenoid acetoxydehydroaustin. The first step of the pathway is the synthesis of 3,5-dimethylorsellinic acid by the polyketide synthase ausA. 3,5-dimethylorsellinic acid is then prenylated by the polyprenyl transferase ausN. Further epoxidation by the FAD-dependent monooxygenase ausM and cyclization by the probable terpene cyclase ausL lead to the formation of protoaustinoid A. Protoaustinoid A is then oxidized to spiro-lactone preaustinoid A3 by the combined action of the FAD-binding monooxygenases ausB and ausC, and the dioxygenase ausE. Acid-catalyzed keto-rearrangement and ring contraction of the tetraketide portion of preaustinoid A3 by ausJ lead to the formation of preaustinoid A4. The aldo-keto reductase ausK, with the help of ausH, is involved in the next step by transforming preaustinoid A4 into isoaustinone which is in turn hydroxylated by the P450 monooxygenase ausI to form austinolide. The cytochrome P450 monooxygenase ausG then modifies austinolide to austinol. Austinol is further acetylated to austin by the O-acetyltransferase ausP, which spontaneously changes to dehydroaustin. The cytochrome P450 monooxygenase then converts dehydroaustin is into 7-dehydrodehydroaustin. The hydroxylation catalyzed by ausR permits the second O-acetyltransferase ausQ to add an additional acetyl group to the molecule, leading to the formation of acetoxydehydroaustin. Due to genetic rearrangements of the clusters and the subsequent loss of some enzymes, the end product of the Penicillium brasilianum austinoid biosynthesis clusters is acetoxydehydroaustin. In Penicillium brasilianum, this protein is Cytochrome P450 monooxygenase ausR.